Reading from the N-terminus, the 149-residue chain is D-aminoacyl-tRNA deacylase (149 aa).

Residues 137–138 (GP) carry the Gly-cisPro motif, important for rejection of L-amino acids motif.

Belongs to the DTD family. In terms of assembly, homodimer.

The protein localises to the cytoplasm. The enzyme catalyses glycyl-tRNA(Ala) + H2O = tRNA(Ala) + glycine + H(+). The catalysed reaction is a D-aminoacyl-tRNA + H2O = a tRNA + a D-alpha-amino acid + H(+). An aminoacyl-tRNA editing enzyme that deacylates mischarged D-aminoacyl-tRNAs. Also deacylates mischarged glycyl-tRNA(Ala), protecting cells against glycine mischarging by AlaRS. Acts via tRNA-based rather than protein-based catalysis; rejects L-amino acids rather than detecting D-amino acids in the active site. By recycling D-aminoacyl-tRNA to D-amino acids and free tRNA molecules, this enzyme counteracts the toxicity associated with the formation of D-aminoacyl-tRNA entities in vivo and helps enforce protein L-homochirality. In Syntrophus aciditrophicus (strain SB), this protein is D-aminoacyl-tRNA deacylase.